We begin with the raw amino-acid sequence, 450 residues long: Bifunctional protein GlmU (450 aa).

The tract at residues 1-229 is pyrophosphorylase; sequence MGVALIVLAA…EAETLGINTR (229 aa). Residues 8-11, lysine 22, glutamine 75, 80-81, 103-105, glycine 141, glutamate 155, asparagine 170, and asparagine 227 each bind UDP-N-acetyl-alpha-D-glucosamine; these read LAAG, GT, and YGD. Aspartate 105 lines the Mg(2+) pocket. Asparagine 227 lines the Mg(2+) pocket. A linker region spans residues 230-250; sequence TELAAAEQAFQARARARALED. Positions 251–450 are N-acetyltransferase; the sequence is GVTLADPATT…RARKSAKGAQ (200 aa). Arginine 316 and lysine 334 together coordinate UDP-N-acetyl-alpha-D-glucosamine. Catalysis depends on histidine 346, which acts as the Proton acceptor. 2 residues coordinate UDP-N-acetyl-alpha-D-glucosamine: tyrosine 349 and asparagine 360. Residues alanine 363, 369 to 370, serine 388, threonine 406, and arginine 423 each bind acetyl-CoA; that span reads NY.

It in the N-terminal section; belongs to the N-acetylglucosamine-1-phosphate uridyltransferase family. This sequence in the C-terminal section; belongs to the transferase hexapeptide repeat family. As to quaternary structure, homotrimer. Mg(2+) serves as cofactor.

Its subcellular location is the cytoplasm. The enzyme catalyses alpha-D-glucosamine 1-phosphate + acetyl-CoA = N-acetyl-alpha-D-glucosamine 1-phosphate + CoA + H(+). The catalysed reaction is N-acetyl-alpha-D-glucosamine 1-phosphate + UTP + H(+) = UDP-N-acetyl-alpha-D-glucosamine + diphosphate. Its pathway is nucleotide-sugar biosynthesis; UDP-N-acetyl-alpha-D-glucosamine biosynthesis; N-acetyl-alpha-D-glucosamine 1-phosphate from alpha-D-glucosamine 6-phosphate (route II): step 2/2. It functions in the pathway nucleotide-sugar biosynthesis; UDP-N-acetyl-alpha-D-glucosamine biosynthesis; UDP-N-acetyl-alpha-D-glucosamine from N-acetyl-alpha-D-glucosamine 1-phosphate: step 1/1. The protein operates within bacterial outer membrane biogenesis; LPS lipid A biosynthesis. Functionally, catalyzes the last two sequential reactions in the de novo biosynthetic pathway for UDP-N-acetylglucosamine (UDP-GlcNAc). The C-terminal domain catalyzes the transfer of acetyl group from acetyl coenzyme A to glucosamine-1-phosphate (GlcN-1-P) to produce N-acetylglucosamine-1-phosphate (GlcNAc-1-P), which is converted into UDP-GlcNAc by the transfer of uridine 5-monophosphate (from uridine 5-triphosphate), a reaction catalyzed by the N-terminal domain. The polypeptide is Bifunctional protein GlmU (Dinoroseobacter shibae (strain DSM 16493 / NCIMB 14021 / DFL 12)).